The primary structure comprises 351 residues: MSAPVIPKTQKGVIFETSGGPLMYKDIPVPVPADDEILVNVKFSGVCHTDLHAWKGDWPLDTKLPLVGGHEGAGVVVAKGKNVDTFEIGDYAGIKWINKACYTCEFCQVAAEPNCPNATMSGYTHDGSFQQYATANAVQAAHIPKNCDLAEIAPILCAGITVYKALKTAAILAGQWVAVTGAGGGLGTLAVQYAKAMGYRVLAIDTGADKEKMCKDLGAEVFIDFAKTKDLVKDVQEATKGGPHAVINVSVSEFAVNQSIEYVRTLGTVVLVGLPAGAVCKSPIFQQVARSIQIKGSYVGNRADSQEAIEFFSRGLVKSPIIIIGLSELEKVYKLMEEGKIAGRYVLDTSK.

Residues C47, H70, C101, C104, C107, C115, and C157 each contribute to the Zn(2+) site. NAD(+) contacts are provided by residues 181 to 187 (GAGGGLG), D205, K210, 272 to 274 (VGL), and R344.

It belongs to the zinc-containing alcohol dehydrogenase family. As to quaternary structure, homotetramer. Zn(2+) serves as cofactor.

It catalyses the reaction a secondary alcohol + NAD(+) = a ketone + NADH + H(+). Functionally, versatile oxidoreductase that catalyzes the oxidation and reduction of a broad range of substrates. Preferentially oxidizes secondary alcohols. Has highest activity for racemic 2-octanol. Is also an efficient reductase for selected substrates. Substrate selectivity was found for medium chain lipophilic ketones. Has highest activities for 2-octanone, 2-nonanone and 2-decanone. The enzyme is (S)-selective in the reduction direction and produces exclusively the (S)-enantiomer. The chain is Alcohol dehydrogenase 2 (ADH2) from Yarrowia lipolytica (strain CLIB 122 / E 150) (Yeast).